The sequence spans 376 residues: N-acetyldiaminopimelate deacetylase (376 aa).

D69 is a catalytic residue. The active-site Proton acceptor is E128.

The protein belongs to the peptidase M20A family. N-acetyldiaminopimelate deacetylase subfamily.

It carries out the reaction N-acetyl-(2S,6S)-2,6-diaminopimelate + H2O = (2S,6S)-2,6-diaminopimelate + acetate. Its pathway is amino-acid biosynthesis; L-lysine biosynthesis via DAP pathway; LL-2,6-diaminopimelate from (S)-tetrahydrodipicolinate (acetylase route): step 3/3. Catalyzes the conversion of N-acetyl-diaminopimelate to diaminopimelate and acetate. The chain is N-acetyldiaminopimelate deacetylase from Streptococcus pneumoniae (strain JJA).